The primary structure comprises 2220 residues: Calcineurin-binding protein cabin-1 (2220 aa).

Phosphoserine occurs at positions 10 and 11. Phosphothreonine is present on Thr12. Phosphoserine is present on residues Ser20 and Ser66. TPR repeat units follow at residues 36–69 (AFAL…SLLR), 90–123 (YSTY…DSTD), and 125–157 (NLWY…NPDH). The interval 361–400 (GAPVGDISGGDKSKKGVKRKKISEESGETAKRRSARVRNT) is disordered. The segment covering 382-391 (ISEESGETAK) has biased composition (basic and acidic residues). 2 positions are modified to phosphoserine: Ser433 and Ser450. One copy of the TPR 4 repeat lies at 615 to 648 (VRVYWLKARFLALQGDMEQALENYDICTEMLQSS). Ser673 is modified (phosphoserine). 2 TPR repeats span residues 1055-1088 (NELY…CPNR) and 1106-1139 (KLNS…DSSN). Disordered stretches follow at residues 1299-1476 (FARG…STPT), 1668-1845 (AEGS…RLSR), 1916-2165 (AQRQ…GSIS), and 2197-2220 (VLET…YMDI). Residues 1301–1324 (RGEEKNTPKASEKEKACLVDEDSH) are compositionally biased toward basic and acidic residues. A compositionally biased stretch (low complexity) spans 1327–1349 (AGTLPGPGASLPSSSGPGLTSPP). Positions 1377–1397 (DSTAVALSDSSSTQDFFNEPT) are enriched in polar residues. Over residues 1402-1412 (GSRKSYTEKRL) the composition is skewed to basic and acidic residues. Ser1439 carries the phosphoserine modification. The span at 1715 to 1725 (SGPGPEPGGKV) shows a compositional bias: gly residues. 2 stretches are compositionally biased toward basic and acidic residues: residues 1744-1753 (SGERKDKESP) and 1784-1794 (PARDRGPESRP). The span at 1812-1823 (PLTPAQPAPAPA) shows a compositional bias: pro residues. Polar residues-rich tracts occupy residues 1918 to 1927 (RQASGDTPTT) and 1975 to 1989 (TIIT…STLD). Phosphothreonine is present on Thr1924. A compositionally biased stretch (basic and acidic residues) spans 2070-2081 (GKLRPEPRRDGE). Residues 2091–2112 (PLSSPPTAASSKAPSSGSAQPP) are compositionally biased toward low complexity. Ser2094 carries the post-translational modification Phosphoserine. The required for interaction with calcineurin stretch occupies residues 2116–2153 (PGKPEPSRAKSRPLPNMPKLVIPSAATKFPPEITVTPP). Residues Thr2151 and Thr2154 each carry the phosphothreonine modification. Over residues 2207 to 2220 (LESETDEDDDYMDI) the composition is skewed to acidic residues.

In terms of assembly, component of a complex that includes at least ASF1A, CABIN1, HIRA, histone H3.3 and UBN1. Interacts with calcineurin. Interacts with MEF2B. Activated through PKC-mediated hyperphosphorylation. Phosphorylation by the DNA damage kinases ATM and CHK2 enhances ubiquitination. Post-translationally, upon genotoxic stress, ubiquitination by the DCX(DDB2) E3 ubiquitin-protein ligase complex targets CABIN1 for proteasomal degradation, leading to the release of p53/TP53. Widely expressed in different tissues.

Its subcellular location is the nucleus. In terms of biological role, may be required for replication-independent chromatin assembly. May serve as a negative regulator of T-cell receptor (TCR) signaling via inhibition of calcineurin. Inhibition of activated calcineurin is dependent on both PKC and calcium signals. Acts as a negative regulator of p53/TP53 by keeping p53 in an inactive state on chromatin at promoters of a subset of it's target genes. The sequence is that of Calcineurin-binding protein cabin-1 (CABIN1) from Homo sapiens (Human).